A 364-amino-acid chain; its full sequence is Protein BRI1-5 ENHANCED 1 (364 aa).

Over residues 1-11 the composition is skewed to acidic residues; sequence MVREEQEEDDN. Residues 1–22 form a disordered region; that stretch reads MVREEQEEDDNNNNNNGGGERK. NADP(+) is bound by residues 44–49, Arg69, 98–99, Tyr202, Lys206, Val232, and Ser244; these read GGSGFV and DL. Lys206 functions as the Proton donor in the catalytic mechanism.

Belongs to the NAD(P)-dependent epimerase/dehydratase family. Monomer. In terms of tissue distribution, mainly present in cell elongating-containing tissues. Strongly expressed in roots and flowers, also observed in petioles, stems, leaves and siliques.

Its subcellular location is the cytoplasm. It participates in plant hormone biosynthesis; brassinosteroid biosynthesis. In terms of biological role, element of the brassinosteroid metabolic pathway that regulates typhasterol (TY), castasterone (CS) and brassinolide (BL) levels. Involved in the control of organ elongation. This is Protein BRI1-5 ENHANCED 1 from Arabidopsis thaliana (Mouse-ear cress).